The primary structure comprises 462 residues: Zinc transporter 6-B (462 aa).

Over 1–33 (MGTIYLFRKTQRSLLGKLTQEFRLVTADRRSWK) the chain is Cytoplasmic. The helical transmembrane segment at 34–54 (ILLFGAINVVCTGFLLTWCSS) threads the bilayer. Residues 55–64 (TNSMALTAYT) lie on the Extracellular side of the membrane. A helical membrane pass occupies residues 65-85 (YLTIFDLFSLITSLISYWVMM). Residues 86-98 (KKPSPTYSFGFER) are Cytoplasmic-facing. The helical transmembrane segment at 99-119 (LEVLAVFASTVLAQLGALFIL) threads the bilayer. The Extracellular segment spans residues 120-134 (KESAERFLEQPEIHT). A helical membrane pass occupies residues 135 to 155 (GRLLVGTFVALFFNLFTMLSI). The Cytoplasmic portion of the chain corresponds to 156-200 (RNKPFAYVSEAASTSWLQEHVADLSRSLCGVIPGLSSIFLPRMNP). The helical transmembrane segment at 201 to 221 (FVLIDIAGALALCITYMLIEI) threads the bilayer. The Extracellular portion of the chain corresponds to 222–223 (NN). The chain crosses the membrane as a helical span at residues 224 to 244 (YFAVDTASAIAIAVMTFGTMY). At 245 to 462 (PMSVYSGKVL…TPGQFTQFRQ (218 aa)) the chain is on the cytoplasmic side.

The protein belongs to the cation diffusion facilitator (CDF) transporter (TC 2.A.4) family. SLC30A subfamily. In terms of assembly, heterodimer with SLC30A5; form a functional zinc ion transmembrane transporter.

It localises to the golgi apparatus. Its subcellular location is the trans-Golgi network membrane. Functionally, has probably no intrinsic transporter activity but together with SLC30A5 forms a functional zinc ion:proton antiporter heterodimer, mediating zinc entry into the lumen of organelles along the secretory pathway. As part of that zinc ion:proton antiporter, contributes to zinc ion homeostasis within the early secretory pathway and regulates the activation and folding of enzymes like alkaline phosphatases and enzymes involved in phosphatidylinositol glycan anchor biosynthesis. The polypeptide is Zinc transporter 6-B (slc30a6-b) (Xenopus laevis (African clawed frog)).